Reading from the N-terminus, the 423-residue chain is Gamma-glutamyl phosphate reductase (423 aa).

The protein belongs to the gamma-glutamyl phosphate reductase family.

It localises to the cytoplasm. It catalyses the reaction L-glutamate 5-semialdehyde + phosphate + NADP(+) = L-glutamyl 5-phosphate + NADPH + H(+). It participates in amino-acid biosynthesis; L-proline biosynthesis; L-glutamate 5-semialdehyde from L-glutamate: step 2/2. In terms of biological role, catalyzes the NADPH-dependent reduction of L-glutamate 5-phosphate into L-glutamate 5-semialdehyde and phosphate. The product spontaneously undergoes cyclization to form 1-pyrroline-5-carboxylate. This Pseudomonas fluorescens (strain Pf0-1) protein is Gamma-glutamyl phosphate reductase.